The chain runs to 55 residues: Large ribosomal subunit protein bL33 (55 aa).

The protein belongs to the bacterial ribosomal protein bL33 family.

The sequence is that of Large ribosomal subunit protein bL33 from Novosphingobium aromaticivorans (strain ATCC 700278 / DSM 12444 / CCUG 56034 / CIP 105152 / NBRC 16084 / F199).